A 199-amino-acid polypeptide reads, in one-letter code: TATA-box-binding protein (199 aa).

Repeat copies occupy residues 10 to 86 and 101 to 177.

Belongs to the TBP family.

Functionally, general factor that plays a role in the activation of archaeal genes transcribed by RNA polymerase. Binds specifically to the TATA box promoter element which lies close to the position of transcription initiation. This is TATA-box-binding protein from Pyrobaculum calidifontis (strain DSM 21063 / JCM 11548 / VA1).